Here is a 433-residue protein sequence, read N- to C-terminus: Inositol hexakisphosphate kinase 1 (433 aa).

The interval 100-160 (ETVEQDDTPE…SPKVELHSHS (61 aa)) is disordered. The span at 113 to 123 (PRRKHSRRSLH) shows a compositional bias: basic residues. The span at 139–149 (SFETSESSQEA) shows a compositional bias: polar residues. The span at 150-160 (KSPKVELHSHS) shows a compositional bias: basic and acidic residues. A Phosphoserine modification is found at Ser151. Position 220–228 (220–228 (PCVLDLKMG)) interacts with substrate. The disordered stretch occupies residues 359-383 (EVPPPCGPSTSPSSTSLEAGPSSPP).

This sequence belongs to the inositol phosphokinase (IPK) family. In terms of tissue distribution, highly expressed in brain and testis. Detected at much lower levels in heart, kidney, liver, lung and spleen.

The protein resides in the cytoplasm. It is found in the nucleus. It carries out the reaction 1D-myo-inositol hexakisphosphate + ATP = 5-diphospho-1D-myo-inositol 1,2,3,4,6-pentakisphosphate + ADP. It catalyses the reaction 1-diphospho-1D-myo-inositol 2,3,4,5,6-pentakisphosphate + ATP + H(+) = 1,5-bis(diphospho)-1D-myo-inositol 2,3,4,6-tetrakisphosphate + ADP. Functionally, converts inositol hexakisphosphate (InsP6) to diphosphoinositol pentakisphosphate (InsP7/PP-InsP5). Converts 1,3,4,5,6-pentakisphosphate (InsP5) to PP-InsP4. This is Inositol hexakisphosphate kinase 1 (Ip6k1) from Mus musculus (Mouse).